A 699-amino-acid chain; its full sequence is Elongation factor G (699 aa).

Positions 8-283 (EHIRNIGICA…AVVDFLPSPI (276 aa)) constitute a tr-type G domain. Residues 17-24 (AHIDAGKT), 81-85 (DTPGH), and 135-138 (NKMD) contribute to the GTP site.

Belongs to the TRAFAC class translation factor GTPase superfamily. Classic translation factor GTPase family. EF-G/EF-2 subfamily.

It is found in the cytoplasm. Its function is as follows. Catalyzes the GTP-dependent ribosomal translocation step during translation elongation. During this step, the ribosome changes from the pre-translocational (PRE) to the post-translocational (POST) state as the newly formed A-site-bound peptidyl-tRNA and P-site-bound deacylated tRNA move to the P and E sites, respectively. Catalyzes the coordinated movement of the two tRNA molecules, the mRNA and conformational changes in the ribosome. This chain is Elongation factor G, found in Rickettsia parkeri.